The following is a 718-amino-acid chain: Methionine--tRNA ligase (718 aa).

The 'HIGH' region motif lies at 27-37 (PYANGQIHIGH). Zn(2+) is bound by residues cysteine 158, cysteine 161, cysteine 171, and cysteine 174. The 'KMSKS' region signature appears at 348–352 (KMSKS). Residue lysine 351 coordinates ATP. The 107-residue stretch at 612–718 (DFAKIDLRIA…SGAKPGMRVK (107 aa)) folds into the tRNA-binding domain.

It belongs to the class-I aminoacyl-tRNA synthetase family. MetG type 1 subfamily. In terms of assembly, homodimer. The cofactor is Zn(2+).

It localises to the cytoplasm. The enzyme catalyses tRNA(Met) + L-methionine + ATP = L-methionyl-tRNA(Met) + AMP + diphosphate. Is required not only for elongation of protein synthesis but also for the initiation of all mRNA translation through initiator tRNA(fMet) aminoacylation. The chain is Methionine--tRNA ligase from Burkholderia orbicola (strain AU 1054).